The sequence spans 339 residues: Phenylalanine--tRNA ligase alpha subunit (339 aa).

Glutamate 253 serves as a coordination point for Mg(2+).

The protein belongs to the class-II aminoacyl-tRNA synthetase family. Phe-tRNA synthetase alpha subunit type 1 subfamily. Tetramer of two alpha and two beta subunits. Mg(2+) serves as cofactor.

It is found in the cytoplasm. It catalyses the reaction tRNA(Phe) + L-phenylalanine + ATP = L-phenylalanyl-tRNA(Phe) + AMP + diphosphate + H(+). In Ruthia magnifica subsp. Calyptogena magnifica, this protein is Phenylalanine--tRNA ligase alpha subunit.